Here is a 40-residue protein sequence, read N- to C-terminus: Antifungal protein ginkbilobin-1 (40 aa).

Positions 3–40 (TAFVSSAHNTQKIPAGAPFNRNLRAMLADLRQNAAFAG) constitute a Gnk2-homologous domain. Asparagine 11 is an alpha-D-mannopyranose binding site.

As to expression, expressed in seeds (at the protein level).

Functionally, possesses antifungal activity against B.cinerea, M.arachidicola, F.oxysporum, R.solani and C.comatus and moderate antibacterial activity against S.aureus, P.aeruginosa and E.coli. Inhibits HIV-1 reverse transcriptase and proliferation of murine splenocytes. Exerts antifungal activity through its carbohydrate-binding specificity. This chain is Antifungal protein ginkbilobin-1, found in Ginkgo biloba (Ginkgo).